Here is a 357-residue protein sequence, read N- to C-terminus: UDP-N-acetylglucosamine--N-acetylmuramyl-(pentapeptide) pyrophosphoryl-undecaprenol N-acetylglucosamine transferase (357 aa).

UDP-N-acetyl-alpha-D-glucosamine-binding positions include Thr13–Gly15, Asn125, Arg161, Ser189, Ile243, and Gln288.

It belongs to the glycosyltransferase 28 family. MurG subfamily.

Its subcellular location is the cell inner membrane. The catalysed reaction is di-trans,octa-cis-undecaprenyl diphospho-N-acetyl-alpha-D-muramoyl-L-alanyl-D-glutamyl-meso-2,6-diaminopimeloyl-D-alanyl-D-alanine + UDP-N-acetyl-alpha-D-glucosamine = di-trans,octa-cis-undecaprenyl diphospho-[N-acetyl-alpha-D-glucosaminyl-(1-&gt;4)]-N-acetyl-alpha-D-muramoyl-L-alanyl-D-glutamyl-meso-2,6-diaminopimeloyl-D-alanyl-D-alanine + UDP + H(+). It participates in cell wall biogenesis; peptidoglycan biosynthesis. Cell wall formation. Catalyzes the transfer of a GlcNAc subunit on undecaprenyl-pyrophosphoryl-MurNAc-pentapeptide (lipid intermediate I) to form undecaprenyl-pyrophosphoryl-MurNAc-(pentapeptide)GlcNAc (lipid intermediate II). This Bordetella petrii (strain ATCC BAA-461 / DSM 12804 / CCUG 43448) protein is UDP-N-acetylglucosamine--N-acetylmuramyl-(pentapeptide) pyrophosphoryl-undecaprenol N-acetylglucosamine transferase.